Consider the following 231-residue polypeptide: Large ribosomal subunit protein uL1 (231 aa).

This sequence belongs to the universal ribosomal protein uL1 family. As to quaternary structure, part of the 50S ribosomal subunit.

In terms of biological role, binds directly to 23S rRNA. The L1 stalk is quite mobile in the ribosome, and is involved in E site tRNA release. Protein L1 is also a translational repressor protein, it controls the translation of the L11 operon by binding to its mRNA. This chain is Large ribosomal subunit protein uL1, found in Staphylococcus haemolyticus (strain JCSC1435).